The chain runs to 93 residues: Small ribosomal subunit protein uS19 (93 aa).

Residues 72-93 (GEFSPTRTYRGHNKKDKKMQKK) are disordered. The span at 80–93 (YRGHNKKDKKMQKK) shows a compositional bias: basic residues.

The protein belongs to the universal ribosomal protein uS19 family.

Its function is as follows. Protein S19 forms a complex with S13 that binds strongly to the 16S ribosomal RNA. The protein is Small ribosomal subunit protein uS19 of Aster yellows witches'-broom phytoplasma (strain AYWB).